A 9439-amino-acid chain; its full sequence is Extracellular matrix-binding protein ebh (9439 aa).

29 consecutive FIVAR domains span residues 1815–1871 (ARRR…VNSA), 1901–1957 (AKEQ…INDA), 1985–2041 (AYDT…VRDA), 2071–2127 (AKKR…ITSE), 2155–2211 (AYNK…VTQA), 2241–2297 (AKNR…ISSE), 2325–2381 (AYNK…VEDA), 2411–2467 (AKEK…ITEN), 2488–2551 (DTTS…VNNA), 2581–2638 (ARNR…STEI), 2665–2720 (AKNQ…IRTN), 2748–2804 (AKTA…VSDE), 2832–2888 (AYNQ…VNNA), 2918–2974 (AKEQ…ISNA), 3002–3058 (AYNQ…VTAA), 3088–3144 (AKQQ…ITNE), 3172–3228 (AYNQ…VAQA), 3258–3314 (AKNQ…ISDE), 3335–3398 (DTTE…VNNA), 3428–3484 (ARLN…ITTE), 3512–3567 (AKTA…IKTN), 3595–3650 (IKRQ…VKES), 3678–3733 (AKNR…IRQN), 3802–3860 (SMTA…IDQK), 3928–3983 (AMTQ…LDPA), 4056–4114 (AMQA…VNQK), 4182–4240 (SMGT…VDNA), 4308–4365 (AMHT…INQK), and 4433–4491 (VMEQ…IEQA). The segment covering 2495–2507 (EVRKLSRRGDTNN) has biased composition (basic and acidic residues). Positions 2495 to 2514 (EVRKLSRRGDTNNKKPSSVS) are disordered. The span at 2925–2938 (AVDQVPSTEGMTQQ) shows a compositional bias: polar residues. The interval 2925-2951 (AVDQVPSTEGMTQQTKDDYNSKQQAAQ) is disordered. The tract at residues 4522–4542 (LSGLTNEQKPKENQAVNGAQT) is disordered. Positions 4559-4617 (SMQTLRDLVNNQNAIHSTSNYFNEDSTQKNTYDNAIDNGSTYITGQHNPELNKSTIDQT) constitute an FIVAR 30 domain. The tract at residues 4648-4671 (LGYLNDPQKSGEESLVNGSNTRSE) is disordered. FIVAR domains follow at residues 4685-4743 (AMKQ…IEQK), 4811-4869 (AMQA…IEQA), 4937-4995 (AMSN…IEQA), 5063-5115 (AMEA…VLDK), 5189-5246 (AMLG…INQL), 5314-5372 (LMGA…VTTA), 5440-5498 (AMGE…IDQA), 5566-5624 (AMKK…ITNA), 5692-5750 (AMKQ…IADT), 5818-5875 (DMST…LQDL), 5943-6000 (AMKA…IKQA), 6068-6126 (KMEE…INRT), 6194-6252 (AMQQ…IQAI), and 6320-6378 (EMGT…IADA). The segment covering 5699 to 5712 (QVNQDDQISNSSPF) has biased composition (polar residues). The disordered stretch occupies residues 5699 to 5719 (QVNQDDQISNSSPFINEDSDK). Residues 6413 to 6434 (NNSQRQSEHDEINSAPSRTEVS) are disordered. 18 FIVAR domains span residues 6446-6504 (AMRQ…IEDA), 6572-6630 (AMKA…INRA), 6698-6755 (SMNQ…IDQA), 6823-6877 (TMKA…ANDE), 6949-7007 (AMKK…INTI), 7075-7133 (SMNT…VERA), 7201-7259 (DMKK…IENA), 7327-7384 (AMKH…IKQL), 7452-7510 (AMEN…IEHA), 7578-7636 (AMKA…INSI), 7704-7762 (AMET…VDIV), 7830-7888 (AMKS…VRQA), 7956-8010 (VMGK…TKQA), 8078-8137 (IMGE…IDTF), 8205-8264 (AMKS…IQGL), 8332-8391 (AMKD…VLGL), 8459-8518 (KMKL…IQHL), and 8587-8643 (AMQG…ANII). Residues 9306–9324 (TVGVITLTGLLSSFWLVLA) traverse the membrane as a helical segment. 3 stretches are compositionally biased toward basic and acidic residues: residues 9363–9375 (DKEE…DKHS), 9386–9395 (EKQLSEEDIH), and 9404–9413 (QNSDNKDTKQ). A disordered region spans residues 9363-9439 (DKEEQIQNDD…VVKTKKRSKK (77 aa)). A compositionally biased stretch (basic residues) spans 9414–9439 (KKVTSKKKKTPQSTKKVVKTKKRSKK).

The protein localises to the cell membrane. In Staphylococcus epidermidis (strain ATCC 35984 / DSM 28319 / BCRC 17069 / CCUG 31568 / BM 3577 / RP62A), this protein is Extracellular matrix-binding protein ebh (ebh).